A 102-amino-acid chain; its full sequence is Urease subunit beta (102 aa).

It belongs to the urease beta subunit family. In terms of assembly, heterotrimer of UreA (gamma), UreB (beta) and UreC (alpha) subunits. Three heterotrimers associate to form the active enzyme.

It is found in the cytoplasm. The catalysed reaction is urea + 2 H2O + H(+) = hydrogencarbonate + 2 NH4(+). It participates in nitrogen metabolism; urea degradation; CO(2) and NH(3) from urea (urease route): step 1/1. The polypeptide is Urease subunit beta (Acinetobacter baylyi (strain ATCC 33305 / BD413 / ADP1)).